The sequence spans 390 residues: Methylthioribose-1-phosphate isomerase (390 aa).

Asp258 functions as the Proton donor in the catalytic mechanism.

It belongs to the eIF-2B alpha/beta/delta subunits family. MtnA subfamily.

Its subcellular location is the cytoplasm. It is found in the nucleus. The enzyme catalyses 5-(methylsulfanyl)-alpha-D-ribose 1-phosphate = 5-(methylsulfanyl)-D-ribulose 1-phosphate. Its pathway is amino-acid biosynthesis; L-methionine biosynthesis via salvage pathway; L-methionine from S-methyl-5-thio-alpha-D-ribose 1-phosphate: step 1/6. Catalyzes the interconversion of methylthioribose-1-phosphate (MTR-1-P) into methylthioribulose-1-phosphate (MTRu-1-P). In Coccidioides posadasii (strain C735) (Valley fever fungus), this protein is Methylthioribose-1-phosphate isomerase.